The following is a 106-amino-acid chain: ATP-dependent Clp protease adapter protein ClpS (106 aa).

A compositionally biased stretch (basic and acidic residues) spans 1-13 (MPRKTSHEHDHGL). Residues 1–21 (MPRKTSHEHDHGLVVETSKPE) form a disordered region.

It belongs to the ClpS family. As to quaternary structure, binds to the N-terminal domain of the chaperone ClpA.

In terms of biological role, involved in the modulation of the specificity of the ClpAP-mediated ATP-dependent protein degradation. This Xanthomonas campestris pv. campestris (strain 8004) protein is ATP-dependent Clp protease adapter protein ClpS.